Reading from the N-terminus, the 937-residue chain is Isoleucine--tRNA ligase (937 aa).

A 'HIGH' region motif is present at residues 58–68 (PYANGSIHIGH). Position 561 (Glu-561) interacts with L-isoleucyl-5'-AMP. Positions 602–606 (KMSKS) match the 'KMSKS' region motif. ATP is bound at residue Lys-605. Cys-900, Cys-903, Cys-920, and Cys-923 together coordinate Zn(2+).

Belongs to the class-I aminoacyl-tRNA synthetase family. IleS type 1 subfamily. Monomer. Requires Zn(2+) as cofactor.

The protein localises to the cytoplasm. The catalysed reaction is tRNA(Ile) + L-isoleucine + ATP = L-isoleucyl-tRNA(Ile) + AMP + diphosphate. Its function is as follows. Catalyzes the attachment of isoleucine to tRNA(Ile). As IleRS can inadvertently accommodate and process structurally similar amino acids such as valine, to avoid such errors it has two additional distinct tRNA(Ile)-dependent editing activities. One activity is designated as 'pretransfer' editing and involves the hydrolysis of activated Val-AMP. The other activity is designated 'posttransfer' editing and involves deacylation of mischarged Val-tRNA(Ile). In Pectobacterium carotovorum subsp. carotovorum (strain PC1), this protein is Isoleucine--tRNA ligase.